A 360-amino-acid polypeptide reads, in one-letter code: Protein phosphatase methylesterase 1 (360 aa).

The tract at residues 26–50 is disordered; sequence DEDDIPEPAVMPPTGNSSSTANTED. Active-site residues include serine 167, aspartate 192, and histidine 316.

Belongs to the AB hydrolase superfamily.

It catalyses the reaction [phosphatase 2A protein]-C-terminal L-leucine methyl ester + H2O = [phosphatase 2A protein]-C-terminal L-leucine + methanol + H(+). Functionally, demethylates proteins that have been reversibly carboxymethylated. Demethylates the phosphatase PP2A catalytic subunit. Involved in the regulation of filamentous growth. This is Protein phosphatase methylesterase 1 (PPE1) from Candida albicans (strain SC5314 / ATCC MYA-2876) (Yeast).